We begin with the raw amino-acid sequence, 61 residues long: Metallothionein-1 (61 aa).

Methionine 1 bears the N-acetylmethionine mark. The beta stretch occupies residues 1–29 (MDPNCSCSTGGSCTCTSSCACKNCKCTSC). Residues cysteine 5, cysteine 7, cysteine 13, cysteine 15, cysteine 19, cysteine 21, cysteine 24, cysteine 26, cysteine 29, cysteine 33, cysteine 34, cysteine 36, cysteine 37, cysteine 41, cysteine 44, cysteine 48, cysteine 50, cysteine 57, cysteine 59, and cysteine 60 each contribute to the a divalent metal cation site. Residues 30 to 61 (KKSCCSCCPVGCSKCAQGCVCKGAADKCTCCA) are alpha.

This sequence belongs to the metallothionein superfamily. Type 1 family.

Functionally, metallothioneins have a high content of cysteine residues that bind various heavy metals; these proteins are transcriptionally regulated by both heavy metals and glucocorticoids. The sequence is that of Metallothionein-1 (Mt1) from Mus musculus (Mouse).